The following is a 594-amino-acid chain: Potassium-transporting ATPase potassium-binding subunit (594 aa).

The next 10 helical transmembrane spans lie at 3–23 (ADFL…APLL), 67–87 (AVAM…LQRL), 136–156 (ALTV…IALV), 179–199 (LYVL…QGVV), 287–307 (LEML…GEMV), 314–334 (VAIL…AAYF), 415–435 (GLYG…LMIG), 453–473 (VALV…VAVL), 519–539 (VLLG…ILAL), and 562–582 (LFVA…YVPA).

This sequence belongs to the KdpA family. The system is composed of three essential subunits: KdpA, KdpB and KdpC.

It localises to the cell inner membrane. Part of the high-affinity ATP-driven potassium transport (or Kdp) system, which catalyzes the hydrolysis of ATP coupled with the electrogenic transport of potassium into the cytoplasm. This subunit binds the periplasmic potassium ions and delivers the ions to the membrane domain of KdpB through an intramembrane tunnel. This chain is Potassium-transporting ATPase potassium-binding subunit, found in Bordetella pertussis (strain Tohama I / ATCC BAA-589 / NCTC 13251).